Consider the following 81-residue polypeptide: Fungal defensin micasin (81 aa).

The signal sequence occupies residues 1–21; it reads MQFTKLATILLVSLMGSAAIA. Positions 22-43 are excised as a propeptide; the sequence is APATNNAAVDAAADATPAVEKR. Intrachain disulfides connect Cys-47-Cys-68, Cys-54-Cys-76, and Cys-58-Cys-78.

The protein belongs to the invertebrate defensin family.

Its subcellular location is the secreted. In terms of biological role, antibacterial peptide with potent activity against both Gram-positive and Gram-negative bacteria. May kill bacteria via an intracellular action mode to affect protein folding. Does not show effects on tested filamentous fungi or on the yeast S.cerevisiae. Does not act by destroying the membrane integrity, which is consistent with its nonamphiphilic architecture. Acts more rapidly than vancomycin, suggesting it does not act by inhibiting cell-wall biosynthesis. Does not cause hemolysis and has no cytotoxic effect on HEK cells. In vivo, is as efficient as vancomycin to protect mouse peritonitis models from S.aureus and P.aeruginosa infections. The sequence is that of Fungal defensin micasin from Arthroderma otae (Microsporum canis).